The sequence spans 88 residues: Apolipoprotein C-I (88 aa).

The N-terminal stretch at 1–26 is a signal peptide; it reads MRLILSLPVLVVVLSMVLEGPAPAQA.

The protein belongs to the apolipoprotein C1 family.

It localises to the secreted. Inhibitor of lipoprotein binding to the low density lipoprotein (LDL) receptor, LDL receptor-related protein, and very low density lipoprotein (VLDL) receptor. Associates with high density lipoproteins (HDL) and the triacylglycerol-rich lipoproteins in the plasma and makes up about 10% of the protein of the VLDL and 2% of that of HDL. Appears to interfere directly with fatty acid uptake and is also the major plasma inhibitor of cholesteryl ester transfer protein (CETP). Binds free fatty acids and reduces their intracellular esterification. Modulates the interaction of APOE with beta-migrating VLDL and inhibits binding of beta-VLDL to the LDL receptor-related protein. This chain is Apolipoprotein C-I (APOC1), found in Lycaon pictus (African wild dog).